The following is a 190-amino-acid chain: Segregation and condensation protein B (190 aa).

Belongs to the ScpB family. As to quaternary structure, homodimer. Homodimerization may be required to stabilize the binding of ScpA to the Smc head domains. Component of a cohesin-like complex composed of ScpA, ScpB and the Smc homodimer, in which ScpA and ScpB bind to the head domain of Smc. The presence of the three proteins is required for the association of the complex with DNA.

The protein resides in the cytoplasm. Its function is as follows. Participates in chromosomal partition during cell division. May act via the formation of a condensin-like complex containing Smc and ScpA that pull DNA away from mid-cell into both cell halves. This Bacillus thuringiensis subsp. konkukian (strain 97-27) protein is Segregation and condensation protein B.